The following is a 503-amino-acid chain: Putative FBD-associated F-box protein At5g56410 (503 aa).

Residues 2–50 form the F-box domain; the sequence is DKITGFSDDELLVKILSFLPTKAAVTTSILSKQWKFLWMRLPKLEYHDD. The region spanning 361-412 is the FBD domain; sequence FWEQMITSVPQCLLSSLQTFKWLGNGDSIEGKDLATFILRNSCQLKTATISI.

The protein is Putative FBD-associated F-box protein At5g56410 of Arabidopsis thaliana (Mouse-ear cress).